Here is a 165-residue protein sequence, read N- to C-terminus: UPF0254 protein MmarC6_1720 (165 aa).

This sequence belongs to the UPF0254 family.

This chain is UPF0254 protein MmarC6_1720, found in Methanococcus maripaludis (strain C6 / ATCC BAA-1332).